A 306-amino-acid chain; its full sequence is Putative transcriptional regulator (306 aa).

The region spanning 1–61 (MIKRNLNDLL…TRTTRSVSPT (61 aa)) is the HTH lysR-type domain. A DNA-binding region (H-T-H motif) is located at residues 21–40 (FTRAAAQLGVTQSALSQSIS).

It belongs to the LysR transcriptional regulatory family.

Its function is as follows. May have a role in the regulation of oprD expression. The sequence is that of Putative transcriptional regulator from Pseudomonas aeruginosa (strain ATCC 15692 / DSM 22644 / CIP 104116 / JCM 14847 / LMG 12228 / 1C / PRS 101 / PAO1).